Here is a 453-residue protein sequence, read N- to C-terminus: tRNA hydroxylation protein P (453 aa).

This sequence belongs to the peptidase U32 family.

Its function is as follows. Involved in prephenate-dependent formation of 5-hydroxyuridine (ho5U) modification at position 34 in tRNAs, the first step in 5-carboxymethoxyuridine (cmo5U) biosynthesis. Involved differently in ho5U formation in each tRNA; tRNA(Leu3) and tRNA(Pro3) are major targets of TrhP. The polypeptide is tRNA hydroxylation protein P (Escherichia coli (strain K12)).